A 1432-amino-acid polypeptide reads, in one-letter code: Probable ATP-dependent RNA helicase spindle-E (1432 aa).

Residues 124 to 291 (LAAINAHPVV…FTTTNSVPPV (168 aa)) form the Helicase ATP-binding domain. Residue 137–144 (GQTGCGKT) coordinates ATP. Residues 237–240 (DEVH) carry the DEAH box motif. In terms of domain architecture, Helicase C-terminal spans 337 to 524 (KIIMVIDNME…NSVLRAKELE (188 aa)). Residues 936–999 (AGAITKGMMV…RLMPKELIQQ (64 aa)) enclose the Tudor domain.

It belongs to the DEAD box helicase family. DEAH subfamily.

The protein resides in the cytoplasm. It carries out the reaction ATP + H2O = ADP + phosphate + H(+). Functionally, probable ATP-binding RNA helicase which plays a central role during spermatogenesis and oogenesis by repressing transposable elements and preventing their mobilization, which is essential for the germline integrity. Acts via the piRNA metabolic process, which mediates the repression of transposable elements during meiosis by forming complexes composed of piRNAs and Piwi and govern the methylation and subsequent repression of transposons. Involved in the repression of LTR retrotransposon copia. Also involved in telomere regulation by repressing specialized telomeric retroelements HeT-A, TAHRE, and TART; Drosophila telomeres being maintained by transposition of specialized telomeric retroelements. Involved in telomeric trans-silencing, a repression mechanism by which a transposon or a transgene inserted in subtelomeric heterochromatin has the capacity to repress in trans in the female germline, a homologous transposon, or transgene located in euchromatin. Involved in the repression of testis-expressed Stellate genes by the homologous Su(Ste) repeats. Required for anteroposterior and dorsoventral axis formation during oogenesis. The chain is Probable ATP-dependent RNA helicase spindle-E (spn-E) from Drosophila erecta (Fruit fly).